The chain runs to 200 residues: ATP-dependent Clp protease proteolytic subunit 2 (200 aa).

The active-site Nucleophile is the Ser-101. His-126 is a catalytic residue.

It belongs to the peptidase S14 family. Fourteen ClpP subunits assemble into 2 heptameric rings which stack back to back to give a disk-like structure with a central cavity, resembling the structure of eukaryotic proteasomes.

It is found in the cytoplasm. It catalyses the reaction Hydrolysis of proteins to small peptides in the presence of ATP and magnesium. alpha-casein is the usual test substrate. In the absence of ATP, only oligopeptides shorter than five residues are hydrolyzed (such as succinyl-Leu-Tyr-|-NHMec, and Leu-Tyr-Leu-|-Tyr-Trp, in which cleavage of the -Tyr-|-Leu- and -Tyr-|-Trp bonds also occurs).. Functionally, cleaves peptides in various proteins in a process that requires ATP hydrolysis. Has a chymotrypsin-like activity. Plays a major role in the degradation of misfolded proteins. The polypeptide is ATP-dependent Clp protease proteolytic subunit 2 (Prochlorococcus marinus (strain MIT 9313)).